Reading from the N-terminus, the 188-residue chain is Ion-translocating oxidoreductase complex subunit B (188 aa).

The interval 1 to 23 is hydrophobic; the sequence is MIEAAVSMSALGLGLGLLLGVAA. In terms of domain architecture, 4Fe-4S spans 29–88; that stretch reads ESPPILDAIEGILPGTNCGACGYPGCRGLAEAMSEGAAPVTACAPGGRDVALALAAIVET. [4Fe-4S] cluster contacts are provided by C46, C49, C54, C71, C113, C116, C119, C123, C143, C146, C149, and C153. 2 4Fe-4S ferredoxin-type domains span residues 104–133 and 134–163; these read TVAFIFEDHCTGCMRCFKRCPTDAIIGANR and QIHTVVTDACIGCNACIEACPTEAIVARVK.

The protein belongs to the 4Fe4S bacterial-type ferredoxin family. RnfB subfamily. The complex is composed of six subunits: RnfA, RnfB, RnfC, RnfD, RnfE and RnfG. [4Fe-4S] cluster is required as a cofactor.

Its subcellular location is the cellular chromatophore membrane. Its function is as follows. Part of a membrane-bound complex that couples electron transfer with translocation of ions across the membrane. This is Ion-translocating oxidoreductase complex subunit B from Cereibacter sphaeroides (strain ATCC 17029 / ATH 2.4.9) (Rhodobacter sphaeroides).